Consider the following 194-residue polypeptide: Outer surface 22 kDa lipoprotein (194 aa).

An N-terminal signal peptide occupies residues 1–21; the sequence is MYKNGFFKNYLSLFLIFLVIA. A lipid anchor (N-palmitoyl cysteine) is attached at Cys22. Residue Cys22 is the site of S-diacylglycerol cysteine attachment.

Its subcellular location is the cell outer membrane. In Borreliella burgdorferi (strain ZS7) (Borrelia burgdorferi), this protein is Outer surface 22 kDa lipoprotein (p22).